The following is a 610-amino-acid chain: UvrABC system protein C (610 aa).

The GIY-YIG domain occupies 16 to 94 (SQPGVYRMYD…IKLYQPRYNV (79 aa)). One can recognise a UVR domain in the interval 204-239 (QQVLTQLITRMEEASQQLHFEDAARIRDQIQAVRRV).

It belongs to the UvrC family. In terms of assembly, interacts with UvrB in an incision complex.

It is found in the cytoplasm. Functionally, the UvrABC repair system catalyzes the recognition and processing of DNA lesions. UvrC both incises the 5' and 3' sides of the lesion. The N-terminal half is responsible for the 3' incision and the C-terminal half is responsible for the 5' incision. The protein is UvrABC system protein C of Yersinia pseudotuberculosis serotype I (strain IP32953).